The chain runs to 524 residues: Putative mediator of RNA polymerase II transcription subunit 8 (524 aa).

2 coiled-coil regions span residues 117-146 (LKLH…SKHK) and 175-211 (NAQQ…QQQQ). Disordered regions lie at residues 312–340 (VASP…QPSI), 356–379 (LPNT…IGGG), and 430–451 (QQNQ…IQHL). Positions 314 to 333 (SPQQQVTSKQVPIQSTNKPL) are enriched in polar residues. Residues 356–374 (LPNTTSPPVNNNNQSPINS) show a composition bias toward low complexity. Residues 398–478 (IQQQIQLQQQ…LQQQFQQQQL (81 aa)) are a coiled coil.

It belongs to the Mediator complex subunit 8 family. Component of the Mediator complex. May be part of a multisubunit E3 ubiquitin-protein ligase complex.

It is found in the nucleus. It participates in protein modification; protein ubiquitination. Its function is as follows. Component of the Mediator complex, a coactivator involved in the regulated transcription of nearly all RNA polymerase II-dependent genes. Mediator functions as a bridge to convey information from gene-specific regulatory proteins to the basal RNA polymerase II transcription machinery. Mediator is recruited to promoters by direct interactions with regulatory proteins and serves as a scaffold for the assembly of a functional preinitiation complex with RNA polymerase II and the general transcription factors. May play a role as a target recruitment subunit in E3 ubiquitin-protein ligase complexes and thus in ubiquitination and subsequent proteasomal degradation of target proteins. This is Putative mediator of RNA polymerase II transcription subunit 8 (med8) from Dictyostelium discoideum (Social amoeba).